We begin with the raw amino-acid sequence, 171 residues long: uncharacterized protein (171 aa).

Helical transmembrane passes span 13-35 and 50-72; these read VGASLKVPAIAAGAAFFLSIATA and ATVLALGAGVTAYALRALLAYVV.

Its subcellular location is the cell membrane. This is an uncharacterized protein from Treponema pallidum (strain Nichols).